A 590-amino-acid polypeptide reads, in one-letter code: V-type ATP synthase alpha chain (590 aa).

An ATP-binding site is contributed by 231-238 (GPFGSGKT).

It belongs to the ATPase alpha/beta chains family.

It carries out the reaction ATP + H2O + 4 H(+)(in) = ADP + phosphate + 5 H(+)(out). Its function is as follows. Produces ATP from ADP in the presence of a proton gradient across the membrane. The V-type alpha chain is a catalytic subunit. The polypeptide is V-type ATP synthase alpha chain (Clostridium botulinum (strain Langeland / NCTC 10281 / Type F)).